A 479-amino-acid polypeptide reads, in one-letter code: Sulfate adenylyltransferase subunit 1 (479 aa).

In terms of domain architecture, tr-type G spans 25-239 (KSLLRFLTCG…EVLETVDIQR (215 aa)). The interval 34–41 (GSVDDGKS) is G1. 34 to 41 (GSVDDGKS) provides a ligand contact to GTP. The segment at 92 to 96 (GITID) is G2. The segment at 113–116 (DTPG) is G3. Residues 113-117 (DTPGH) and 168-171 (NKMD) contribute to the GTP site. The G4 stretch occupies residues 168 to 171 (NKMD). Residues 206 to 208 (SAL) are G5.

It belongs to the TRAFAC class translation factor GTPase superfamily. Classic translation factor GTPase family. CysN/NodQ subfamily. In terms of assembly, heterodimer composed of CysD, the smaller subunit, and CysN.

The enzyme catalyses sulfate + ATP + H(+) = adenosine 5'-phosphosulfate + diphosphate. The protein operates within sulfur metabolism; hydrogen sulfide biosynthesis; sulfite from sulfate: step 1/3. Functionally, with CysD forms the ATP sulfurylase (ATPS) that catalyzes the adenylation of sulfate producing adenosine 5'-phosphosulfate (APS) and diphosphate, the first enzymatic step in sulfur assimilation pathway. APS synthesis involves the formation of a high-energy phosphoric-sulfuric acid anhydride bond driven by GTP hydrolysis by CysN coupled to ATP hydrolysis by CysD. This chain is Sulfate adenylyltransferase subunit 1, found in Salmonella typhi.